The chain runs to 345 residues: Protein RecA (345 aa).

Gly63–Thr70 lines the ATP pocket. Residues Val326–Asp345 are disordered. Over residues Pro335–Asp345 the composition is skewed to acidic residues.

It belongs to the RecA family.

The protein localises to the cytoplasm. In terms of biological role, can catalyze the hydrolysis of ATP in the presence of single-stranded DNA, the ATP-dependent uptake of single-stranded DNA by duplex DNA, and the ATP-dependent hybridization of homologous single-stranded DNAs. It interacts with LexA causing its activation and leading to its autocatalytic cleavage. This is Protein RecA from Gluconobacter oxydans (strain 621H) (Gluconobacter suboxydans).